The primary structure comprises 409 residues: Glycosyltransferase GtfE (409 aa).

The protein belongs to the glycosyltransferase 28 family.

The protein operates within antibiotic biosynthesis; vancomycin biosynthesis. In terms of biological role, D-glucosyltransferase that acts on the aglycone core, transferring D-glucose to the phenolic hydroxyl of OH-Phegly(4) to form a devancoaminyl-vancomycin (DVV) intermediate in the biosynthesis of glycopeptide antibiotic vancomycin. Also able to glycosylate A47934, an antibiotic with a teicoplanin-like heptapeptide, but lacking sugar residues. The sequence is that of Glycosyltransferase GtfE (gtfE) from Amycolatopsis orientalis (Nocardia orientalis).